The chain runs to 346 residues: D-alanine--D-alanine ligase (346 aa).

The 201-residue stretch at 125-325 (KRIWRSEGLP…YPALCLEVLR (201 aa)) folds into the ATP-grasp domain. 151 to 206 (FAALGSPMIVKPDREGSTIGLTKVTQIEQCGAAYALAARHDAMVLCEQFVKGDEVT) is an ATP binding site. Positions 278, 292, and 294 each coordinate Mg(2+).

This sequence belongs to the D-alanine--D-alanine ligase family. The cofactor is Mg(2+). It depends on Mn(2+) as a cofactor.

The protein resides in the cytoplasm. It carries out the reaction 2 D-alanine + ATP = D-alanyl-D-alanine + ADP + phosphate + H(+). It functions in the pathway cell wall biogenesis; peptidoglycan biosynthesis. In terms of biological role, cell wall formation. The sequence is that of D-alanine--D-alanine ligase from Albidiferax ferrireducens (strain ATCC BAA-621 / DSM 15236 / T118) (Rhodoferax ferrireducens).